The following is a 490-amino-acid chain: Homoserine O-acetyltransferase (490 aa).

In terms of domain architecture, AB hydrolase-1 spans 47 to 355 (NAILVCHALT…DYGHDAFLLE (309 aa)). The Nucleophile role is filled by Ser152. Position 222 (Arg222) interacts with substrate. Catalysis depends on residues Asp316 and His349. Asp350 lines the substrate pocket. CBS domains are found at residues 376-436 (MKTD…LEDV) and 437-490 (MTKD…ISSY).

The protein belongs to the AB hydrolase superfamily. MetX family. Homodimer.

It is found in the cytoplasm. It catalyses the reaction L-homoserine + acetyl-CoA = O-acetyl-L-homoserine + CoA. Its pathway is amino-acid biosynthesis; L-methionine biosynthesis via de novo pathway; O-acetyl-L-homoserine from L-homoserine: step 1/1. Functionally, transfers an acetyl group from acetyl-CoA to L-homoserine, forming acetyl-L-homoserine. The sequence is that of Homoserine O-acetyltransferase from Methanobrevibacter ruminantium (strain ATCC 35063 / DSM 1093 / JCM 13430 / OCM 146 / M1) (Methanobacterium ruminantium).